The primary structure comprises 160 residues: Transcription elongation factor GreA (160 aa).

Residues 1–71 (MAEKTYPMTK…GQISTLETQI (71 aa)) are a coiled coil.

This sequence belongs to the GreA/GreB family.

In terms of biological role, necessary for efficient RNA polymerase transcription elongation past template-encoded arresting sites. The arresting sites in DNA have the property of trapping a certain fraction of elongating RNA polymerases that pass through, resulting in locked ternary complexes. Cleavage of the nascent transcript by cleavage factors such as GreA or GreB allows the resumption of elongation from the new 3'terminus. GreA releases sequences of 2 to 3 nucleotides. This chain is Transcription elongation factor GreA, found in Streptococcus uberis (strain ATCC BAA-854 / 0140J).